Consider the following 1021-residue polypeptide: Disease resistance protein Pikm2-TS (1021 aa).

The interval 1 to 182 (MELVVGASEA…PQIIGIKEPV (182 aa)) is structured coiled coil (CC) domain. One can recognise an NB-ARC domain in the interval 186–519 (TVMEELEVWL…WIAEGFANEK (334 aa)). A disordered region spans residues 297-317 (PENDGNPDNTPIRLQETTDDD). LRR repeat units follow at residues 612–634 (LAQV…SFNY), 659–682 (MLLL…IQKL), and 683–705 (EYLE…IVQL). Residues 719-751 (RKGLRLPQEKSKKPIKNPSPQGKTKEPAKKGFL) are disordered. LRR repeat units lie at residues 785–807 (LTGL…TFKQ), 817–841 (SCGL…DMPA), 843–865 (PRYL…ITSI), 866–888 (TTLN…ILHI), 912–935 (KDIL…GFKS), and 957–981 (MPAL…ILEN).

It belongs to the disease resistance NB-LRR family. Constitutively expressed.

In terms of biological role, disease resistance (R) protein. Resistance proteins guard the plant against pathogens that contain an appropriate avirulence protein via an indirect interaction with this avirulence protein. That triggers a defense system including the hypersensitive response, which restricts the pathogen growth. Contribution of Pikm-1 is required to recognize the effector avirulence protein AVR-Pik. The protein is Disease resistance protein Pikm2-TS of Oryza sativa subsp. japonica (Rice).